The following is a 195-amino-acid chain: Nascent polypeptide-associated complex subunit alpha (195 aa).

2 disordered regions span residues 1 to 59 (MTGS…SRSE) and 132 to 153 (TREA…EEDS). A compositionally biased stretch (basic and acidic residues) spans 7–16 (TRQKEVKEPQ). Acidic residues predominate over residues 19-33 (VSDDSDNEAVEQELT). Over residues 47–59 (DHIDKQAKQSRSE) the composition is skewed to basic and acidic residues. Positions 56-121 (SRSEKKARKL…AKIEDLTQHA (66 aa)) constitute an NAC-A/B domain. Positions 142-153 (EEDENEDVEEDS) are enriched in acidic residues.

This sequence belongs to the NAC-alpha family. As to quaternary structure, may be part of the nascent polypeptide-associated complex (NAC), which is a heterodimer of icd-2 and icd-1 (via NAC-A/B domains).

Its subcellular location is the cytoplasm. In terms of biological role, may prevent inappropriate targeting of non-secretory polypeptides to the endoplasmic reticulum (ER). Plays a role in the response to heat stress. This Caenorhabditis elegans protein is Nascent polypeptide-associated complex subunit alpha.